The primary structure comprises 122 residues: Large ribosomal subunit protein uL14c (122 aa).

It belongs to the universal ribosomal protein uL14 family. As to quaternary structure, part of the 50S ribosomal subunit.

It is found in the plastid. The protein localises to the chloroplast. Binds to 23S rRNA. The polypeptide is Large ribosomal subunit protein uL14c (Physcomitrium patens (Spreading-leaved earth moss)).